Reading from the N-terminus, the 209-residue chain is Redox-sensing transcriptional repressor Rex (209 aa).

Positions 16–55 (LYYRFIQNLSLSGKQRVSSAELSEAVKVDSATIRRDFSYF) form a DNA-binding region, H-T-H motif. 90–95 (GVGNLG) provides a ligand contact to NAD(+).

It belongs to the transcriptional regulatory Rex family. Homodimer.

The protein resides in the cytoplasm. Modulates transcription in response to changes in cellular NADH/NAD(+) redox state. This Bacillus cereus (strain AH187) protein is Redox-sensing transcriptional repressor Rex.